Reading from the N-terminus, the 384-residue chain is Lipid-A-disaccharide synthase (384 aa).

This sequence belongs to the LpxB family.

It carries out the reaction 2-N,3-O-bis[(3R)-3-hydroxytetradecanoyl]-alpha-D-glucosaminyl 1-phosphate + UDP-2-N,3-O-bis[(3R)-3-hydroxytetradecanoyl]-alpha-D-glucosamine = lipid A disaccharide (E. coli) + UDP + H(+). The enzyme catalyses a lipid X + a UDP-2-N,3-O-bis[(3R)-3-hydroxyacyl]-alpha-D-glucosamine = a lipid A disaccharide + UDP + H(+). It participates in glycolipid biosynthesis; lipid IV(A) biosynthesis; lipid IV(A) from (3R)-3-hydroxytetradecanoyl-[acyl-carrier-protein] and UDP-N-acetyl-alpha-D-glucosamine: step 5/6. Condensation of UDP-2,3-diacylglucosamine and 2,3-diacylglucosamine-1-phosphate to form lipid A disaccharide, a precursor of lipid A, a phosphorylated glycolipid that anchors the lipopolysaccharide to the outer membrane of the cell. The chain is Lipid-A-disaccharide synthase from Blochmanniella floridana.